We begin with the raw amino-acid sequence, 27 residues long: Cupiennin-3c (27 aa).

As to expression, expressed by the venom gland.

It is found in the secreted. This Cupiennius salei (American wandering spider) protein is Cupiennin-3c.